Consider the following 535-residue polypeptide: Probable anion transporter 2, chloroplastic (535 aa).

The transit peptide at 1-95 (MASIRSCVSV…RERAVAAMCS (95 aa)) directs the protein to the chloroplast. Helical transmembrane passes span 125–145 (VVALVAAVMLLCNADRVVMSV), 160–180 (FLGIVQSSFLWGYVFSSMVGG), 191–211 (VMAGAAALWSLATFLTPWAAS), 215–235 (IMLLAIRALFGLAEGVAFPTM), 254–274 (ISMGGFHLGNVISFLATPIIM), 279–299 (LAGTFAFFASLGYLWLSVWLF), 343–363 (IEMWAIIVANVVNNWGYFVLL), 381–401 (AAWFSAIPWAVMALSGYVAGA), 413–433 (VALVRKIMQSIGFIGPGVSLL), 443–463 (VAAVLMTIALSLSSFSQAGYF), 483–503 (GIGTVAAIVSTIGTGYFVQWL), and 504–524 (GSFQAFLTLTAVLYFSATVFY).

Belongs to the major facilitator superfamily. Sodium/anion cotransporter (TC 2.A.1.14) family.

The protein resides in the plastid. It localises to the chloroplast membrane. Probable anion transporter. This is Probable anion transporter 2, chloroplastic (PHT4;2) from Oryza sativa subsp. japonica (Rice).